The chain runs to 155 residues: 6,7-dimethyl-8-ribityllumazine synthase (155 aa).

5-amino-6-(D-ribitylamino)uracil-binding positions include Phe24, 58 to 60 (AFE), and 82 to 84 (VII). A (2S)-2-hydroxy-3-oxobutyl phosphate-binding site is contributed by 87–88 (ST). His90 serves as the catalytic Proton donor. Phe115 is a 5-amino-6-(D-ribitylamino)uracil binding site. Arg129 serves as a coordination point for (2S)-2-hydroxy-3-oxobutyl phosphate.

Belongs to the DMRL synthase family.

It catalyses the reaction (2S)-2-hydroxy-3-oxobutyl phosphate + 5-amino-6-(D-ribitylamino)uracil = 6,7-dimethyl-8-(1-D-ribityl)lumazine + phosphate + 2 H2O + H(+). The protein operates within cofactor biosynthesis; riboflavin biosynthesis; riboflavin from 2-hydroxy-3-oxobutyl phosphate and 5-amino-6-(D-ribitylamino)uracil: step 1/2. In terms of biological role, catalyzes the formation of 6,7-dimethyl-8-ribityllumazine by condensation of 5-amino-6-(D-ribitylamino)uracil with 3,4-dihydroxy-2-butanone 4-phosphate. This is the penultimate step in the biosynthesis of riboflavin. The sequence is that of 6,7-dimethyl-8-ribityllumazine synthase from Chlorobium limicola (strain DSM 245 / NBRC 103803 / 6330).